Consider the following 444-residue polypeptide: Gamma-glutamyl phosphate reductase (444 aa).

It belongs to the gamma-glutamyl phosphate reductase family.

Its subcellular location is the cytoplasm. It carries out the reaction L-glutamate 5-semialdehyde + phosphate + NADP(+) = L-glutamyl 5-phosphate + NADPH + H(+). It participates in amino-acid biosynthesis; L-proline biosynthesis; L-glutamate 5-semialdehyde from L-glutamate: step 2/2. Its function is as follows. Catalyzes the NADPH-dependent reduction of L-glutamate 5-phosphate into L-glutamate 5-semialdehyde and phosphate. The product spontaneously undergoes cyclization to form 1-pyrroline-5-carboxylate. The protein is Gamma-glutamyl phosphate reductase of Albidiferax ferrireducens (strain ATCC BAA-621 / DSM 15236 / T118) (Rhodoferax ferrireducens).